Here is a 152-residue protein sequence, read N- to C-terminus: MMKKIDVKILDPRVGQQFPLPTYATSGSAGLDLRACLDGAVELAPGATTLVPTGLAIHIADPSLAAVMLPRSGLGHKHGIVLGNLVGLIDSDYQGQLMVSIWNRGQDSFTIEPGERIAQMVFVPVVQAEFNLVEAFDATERGEGGFGHSGRK.

Residues 71–73 (RSG), asparagine 84, 88–90 (LID), and methionine 98 contribute to the substrate site.

Belongs to the dUTPase family. It depends on Mg(2+) as a cofactor.

The catalysed reaction is dUTP + H2O = dUMP + diphosphate + H(+). Its pathway is pyrimidine metabolism; dUMP biosynthesis; dUMP from dCTP (dUTP route): step 2/2. In terms of biological role, this enzyme is involved in nucleotide metabolism: it produces dUMP, the immediate precursor of thymidine nucleotides and it decreases the intracellular concentration of dUTP so that uracil cannot be incorporated into DNA. In Salmonella arizonae (strain ATCC BAA-731 / CDC346-86 / RSK2980), this protein is Deoxyuridine 5'-triphosphate nucleotidohydrolase.